The primary structure comprises 142 residues: Large ribosomal subunit protein uL11 (142 aa).

Belongs to the universal ribosomal protein uL11 family. Part of the ribosomal stalk of the 50S ribosomal subunit. Interacts with L10 and the large rRNA to form the base of the stalk. L10 forms an elongated spine to which L12 dimers bind in a sequential fashion forming a multimeric L10(L12)X complex. In terms of processing, one or more lysine residues are methylated.

Functionally, forms part of the ribosomal stalk which helps the ribosome interact with GTP-bound translation factors. This Haemophilus influenzae (strain PittGG) protein is Large ribosomal subunit protein uL11.